Consider the following 866-residue polypeptide: Protein mono-ADP-ribosyltransferase PARP9 (866 aa).

Phosphoserine is present on serine 42. 2 Macro domains span residues 109–298 and 313–492; these read QRVF…ESIL and ASTM…TKRS. In terms of domain architecture, PARP catalytic spans 635 to 853; it reads TNQQEKLDKM…YSSGPGMVSS (219 aa).

This sequence belongs to the ARTD/PARP family. As to quaternary structure, forms a stable complex with E3 ligase DTX3L; the interaction is required for PARP9 mediated ADP-ribosylation of ubiquitin. Interacts (via PARP catalytic domain) with DTX3L (via N-terminus). Forms a complex with STAT1 and DTX3L independently of IFNB1 or IFNG-mediated STAT1 'Tyr-701' phosphorylation. Forms a complex with STAT1, DTX3L and histone H2B H2BC9/H2BJ; the interaction is likely to induce H2BC9/H2BJ ubiquitination. Interacts (via N-terminus) with STAT1. Interacts with PARP14 in IFNG-stimulated macrophages; the interaction prevents PARP14-mediated STAT1 and STAT6 ADP-riboslylation. Interacts with PARP1 (when poly-ADP-ribosylated). ADP-ribosylated by PARP14. As to expression, highly expressed in the thymus and intestine. Expressed in macrophages.

The protein localises to the cytoplasm. It localises to the cytosol. It is found in the nucleus. The catalysed reaction is [protein]-C-terminal glycine + NAD(+) = [protein]-C-terminal O-(ADP-D-ribosyl)-glycine + nicotinamide. With respect to regulation, binding to poly(ADP-ribose) does not affect its activity. Its function is as follows. ADP-ribosyltransferase which, in association with E3 ligase DTX3L, plays a role in DNA damage repair and in immune responses including interferon-mediated antiviral defenses. Within the complex, enhances DTX3L E3 ligase activity which is further enhanced by PARP9 binding to poly(ADP-ribose). In addition, positively regulates DTXL3 protein levels. In association with DTX3L and in presence of E1 and E2 enzymes, mediates NAD(+)-dependent mono-ADP-ribosylation of ubiquitin which prevents ubiquitin conjugation to substrates such as histones. During DNA repair, PARP1 recruits PARP9/BAL1-DTX3L complex to DNA damage sites via PARP9 binding to ribosylated PARP1. Subsequent PARP1-dependent PARP9/BAL1-DTX3L-mediated ubiquitination promotes the rapid and specific recruitment of 53BP1/TP53BP1, UIMC1/RAP80, and BRCA1 to DNA damage sites. In response to DNA damage, PARP9-DTX3L complex is required for efficient non-homologous end joining (NHEJ) but the complex function is restrained by PARP9 activity. Dispensable for B-cell receptor (BCR) assembly through V(D)J recombination and class switch recombination (CSR). In macrophages, positively regulates pro-inflammatory cytokines production in response to IFNG stimulation by suppressing PARP14-mediated STAT1 ADP-ribosylation and thus promoting STAT1 phosphorylation. Also suppresses PARP14-mediated STAT6 ADP-ribosylation. This Mus musculus (Mouse) protein is Protein mono-ADP-ribosyltransferase PARP9 (Parp9).